A 305-amino-acid chain; its full sequence is Ornithine carbamoyltransferase (305 aa).

Carbamoyl phosphate contacts are provided by residues 52–55, Gln-79, Arg-103, and 130–133; these read STRT and HPLQ. L-ornithine is bound by residues Asn-162, Asp-224, and 228-229; that span reads SM. Residues 264–265 and Arg-292 contribute to the carbamoyl phosphate site; that span reads CL.

The protein belongs to the aspartate/ornithine carbamoyltransferase superfamily. OTCase family.

The protein resides in the cytoplasm. The catalysed reaction is carbamoyl phosphate + L-ornithine = L-citrulline + phosphate + H(+). The protein operates within amino-acid biosynthesis; L-arginine biosynthesis; L-arginine from L-ornithine and carbamoyl phosphate: step 1/3. Functionally, reversibly catalyzes the transfer of the carbamoyl group from carbamoyl phosphate (CP) to the N(epsilon) atom of ornithine (ORN) to produce L-citrulline. This Pyrobaculum islandicum (strain DSM 4184 / JCM 9189 / GEO3) protein is Ornithine carbamoyltransferase.